The primary structure comprises 431 residues: MLTIKNWQLLSDNDKRRCLSRPRDNSAIKENVLEIINQVQLSGDKALYDLTKRFDRVNLQYLQISQEKIRQASIPQNALIAIKQAIETISSYHQFLLPENTEISTASGITIRNVYRPIQKVGLYVPGGNKTPLVSSLLMQAIPAKVAGCPIKVLCTPPDAEGEINEHILVAARLCGIDTIYAIGGAQAIAAMAYGTESVIKVDKIFGPGNSYVTQAKTLVAIDADGAAIDMPAGPSEVMILADTEANPEFIAADLLAQAEHGPDSQVILICDECELANQVNQQLEIQMSYLSRIEFIKQSLTNSRIIICSNQSEQLDIINSYAPEHLIINRKNPEPWVEKIVAAGTVFLGSWAAETMGDYVTGSNHVLPTSGFARNHSGLSTLDFMTRFTVQAINQEAIRNLGPAAMTLAELEGLDAHANAVQIRLNTLGD.

NAD(+)-binding residues include Y124, Q187, and N210. Substrate is bound by residues S236, Q258, and H261. Residues Q258 and H261 each coordinate Zn(2+). Active-site proton acceptor residues include E325 and H326. H326, D359, E413, and H418 together coordinate substrate. D359 is a Zn(2+) binding site. Residue H418 participates in Zn(2+) binding.

This sequence belongs to the histidinol dehydrogenase family. It depends on Zn(2+) as a cofactor.

It carries out the reaction L-histidinol + 2 NAD(+) + H2O = L-histidine + 2 NADH + 3 H(+). Its pathway is amino-acid biosynthesis; L-histidine biosynthesis; L-histidine from 5-phospho-alpha-D-ribose 1-diphosphate: step 9/9. Catalyzes the sequential NAD-dependent oxidations of L-histidinol to L-histidinaldehyde and then to L-histidine. The polypeptide is Histidinol dehydrogenase (Legionella pneumophila (strain Paris)).